Reading from the N-terminus, the 139-residue chain is Protein archease (139 aa).

Residues Asp12, Asp138, and Ile139 each contribute to the Ca(2+) site.

This sequence belongs to the archease family.

In terms of biological role, activates the tRNA-splicing ligase complex by facilitating the enzymatic turnover of catalytic subunit RtcB. Acts by promoting the guanylylation of RtcB, a key intermediate step in tRNA ligation. Can also alter the NTP specificity of RtcB such that ATP, dGTP or ITP is used efficiently. The sequence is that of Protein archease from Sulfurisphaera tokodaii (strain DSM 16993 / JCM 10545 / NBRC 100140 / 7) (Sulfolobus tokodaii).